The sequence spans 363 residues: Pyrimidine monooxygenase RutA (363 aa).

FMN contacts are provided by residues 49–50, asparagine 115, glutamate 124, 140–141, and serine 190; these read IK and RY.

Belongs to the NtaA/SnaA/DszA monooxygenase family. RutA subfamily.

The catalysed reaction is uracil + FMNH2 + NADH + O2 = (Z)-3-ureidoacrylate + FMN + NAD(+) + H2O + H(+). It carries out the reaction thymine + FMNH2 + NADH + O2 = (Z)-2-methylureidoacrylate + FMN + NAD(+) + H2O + H(+). Catalyzes the pyrimidine ring opening between N-3 and C-4 by an unusual flavin hydroperoxide-catalyzed mechanism, adding oxygen atoms in the process to yield ureidoacrylate peracid, that immediately reacts with FMN forming ureidoacrylate and FMN-N(5)-oxide. The FMN-N(5)-oxide reacts spontaneously with NADH to produce FMN. Requires the flavin reductase RutF to regenerate FMN in vivo. The polypeptide is Pyrimidine monooxygenase RutA (Escherichia coli O44:H18 (strain 042 / EAEC)).